Reading from the N-terminus, the 193-residue chain is Peptidyl-tRNA hydrolase (193 aa).

Position 21 (Tyr-21) interacts with tRNA. The active-site Proton acceptor is the His-26. Residues Tyr-72, Asn-74, and Asn-120 each contribute to the tRNA site.

Belongs to the PTH family. Monomer.

The protein localises to the cytoplasm. It carries out the reaction an N-acyl-L-alpha-aminoacyl-tRNA + H2O = an N-acyl-L-amino acid + a tRNA + H(+). Functionally, hydrolyzes ribosome-free peptidyl-tRNAs (with 1 or more amino acids incorporated), which drop off the ribosome during protein synthesis, or as a result of ribosome stalling. Catalyzes the release of premature peptidyl moieties from peptidyl-tRNA molecules trapped in stalled 50S ribosomal subunits, and thus maintains levels of free tRNAs and 50S ribosomes. The protein is Peptidyl-tRNA hydrolase of Nocardia farcinica (strain IFM 10152).